Reading from the N-terminus, the 491-residue chain is Glutamyl-tRNA(Gln) amidotransferase subunit A (491 aa).

Residues Lys-76 and Ser-154 each act as charge relay system in the active site. The Acyl-ester intermediate role is filled by Ser-178.

This sequence belongs to the amidase family. GatA subfamily. As to quaternary structure, heterotrimer of A, B and C subunits.

The enzyme catalyses L-glutamyl-tRNA(Gln) + L-glutamine + ATP + H2O = L-glutaminyl-tRNA(Gln) + L-glutamate + ADP + phosphate + H(+). Allows the formation of correctly charged Gln-tRNA(Gln) through the transamidation of misacylated Glu-tRNA(Gln) in organisms which lack glutaminyl-tRNA synthetase. The reaction takes place in the presence of glutamine and ATP through an activated gamma-phospho-Glu-tRNA(Gln). The sequence is that of Glutamyl-tRNA(Gln) amidotransferase subunit A from Cereibacter sphaeroides (strain KD131 / KCTC 12085) (Rhodobacter sphaeroides).